A 108-amino-acid polypeptide reads, in one-letter code: Insertion element IS6110 uncharacterized 12.0 kDa protein (108 aa).

This sequence belongs to the transposase 8 family.

This is Insertion element IS6110 uncharacterized 12.0 kDa protein from Mycobacterium bovis (strain ATCC BAA-935 / AF2122/97).